The sequence spans 4306 residues: Cytoplasmic dynein 2 heavy chain 1 (4306 aa).

A stem region spans residues 1-1650; it reads MAGSLSDVRK…YVQMVDSELQ (1650 aa). Position 145 to 152 (145 to 152) interacts with ATP; the sequence is LGVVLRKS. The stretch at 669–696 forms a coiled coil; sequence KELEGYIQKLQNAAERLATENRRLRKWH. 4 AAA regions span residues 1651 to 1875, 1941 to 2161, 2249 to 2505, and 2617 to 2862; these read YTYE…VLRG, SALK…KQND, LTAD…WVLG, and HYGR…ESCK. ATP is bound by residues 1689–1696, 1979–1986, 2291–2298, and 2655–2662; these read GPAGTGKT, GPSGAGKS, GPEGCGKG, and GRSGVGRR. The segment at 2880-3168 is stalk; that stretch reads AISSSKRKEL…AEVSKAQETI (289 aa). Coiled-coil stretches lie at residues 2896 to 2981, 3108 to 3199, and 3407 to 3441; these read LQAG…KEVQ, LETE…LATL, and IQHE…SLLE. 2 AAA regions span residues 3243 to 3472 and 3689 to 3904; these read LCTE…LIQD and MALF…VIDR.

This sequence belongs to the dynein heavy chain family. As to quaternary structure, the cytoplasmic dynein complex 2 is probably composed by a heavy chain DYNC2H1 homodimer and a number of DYNC2LI1 light intermediate chains. In terms of tissue distribution, widely expressed both in ciliated and unciliated tissues. Detected in brain and testis (at protein level).

It localises to the cytoplasm. It is found in the cytoskeleton. Its subcellular location is the cilium axoneme. The protein localises to the cell membrane. Functionally, may function as a motor for intraflagellar retrograde transport. Functions in cilia biogenesis. May play a role in transport between endoplasmic reticulum and Golgi or organization of the Golgi in cells. This chain is Cytoplasmic dynein 2 heavy chain 1 (Dync2h1), found in Rattus norvegicus (Rat).